The primary structure comprises 70 residues: Acyl carrier protein (70 aa).

The 69-residue stretch at 2–70 folds into the Carrier domain; sequence SDIADRVKKI…ETIQTFGDAP (69 aa). An O-(pantetheine 4'-phosphoryl)serine modification is found at S37.

The protein belongs to the acyl carrier protein (ACP) family. In terms of processing, 4'-phosphopantetheine is transferred from CoA to a specific serine of apo-ACP by AcpS. This modification is essential for activity because fatty acids are bound in thioester linkage to the sulfhydryl of the prosthetic group.

Its subcellular location is the cytoplasm. It participates in lipid metabolism; fatty acid biosynthesis. Functionally, carrier of the growing fatty acid chain in fatty acid biosynthesis. The sequence is that of Acyl carrier protein from Cereibacter sphaeroides (Rhodobacter sphaeroides).